The following is a 405-amino-acid chain: Eukaryotic initiation factor 4A (405 aa).

The short motif at 32-60 (PTFESMGLREELLRGIFNYGFEKPSAIQQ) is the Q motif element. The Helicase ATP-binding domain occupies 63–233 (ILPIIKGRDT…EKFMTKPVRI (171 aa)). 76 to 83 (AQSGTGKT) contributes to the ATP binding site. The short motif at 181–184 (DEAD) is the DEAD box element. In terms of domain architecture, Helicase C-terminal spans 244-405 (GIKQFFVSVE…EMPVNFASII (162 aa)).

The protein belongs to the DEAD box helicase family. eIF4A subfamily.

It is found in the cytoplasm. It carries out the reaction ATP + H2O = ADP + phosphate + H(+). In terms of biological role, ATP-dependent RNA helicase which is a subunit of the eIF4F complex involved in cap recognition and is required for mRNA binding to ribosome. In the current model of translation initiation, eIF4A unwinds RNA secondary structures in the 5'-UTR of mRNAs which is necessary to allow efficient binding of the small ribosomal subunit, and subsequent scanning for the initiator codon. This chain is Eukaryotic initiation factor 4A (tifA), found in Dictyostelium discoideum (Social amoeba).